The sequence spans 272 residues: Formamidopyrimidine-DNA glycosylase (272 aa).

P2 serves as the catalytic Schiff-base intermediate with DNA. E3 functions as the Proton donor in the catalytic mechanism. K58 serves as the catalytic Proton donor; for beta-elimination activity. DNA is bound by residues H92, R111, and R153. The FPG-type zinc-finger motif lies at 238 to 272; sequence AVYGRQGQSCPRCGGLVERCRLGQRSTFFCPACQR. The active-site Proton donor; for delta-elimination activity is the R262.

It belongs to the FPG family. Monomer. Zn(2+) is required as a cofactor.

The enzyme catalyses Hydrolysis of DNA containing ring-opened 7-methylguanine residues, releasing 2,6-diamino-4-hydroxy-5-(N-methyl)formamidopyrimidine.. The catalysed reaction is 2'-deoxyribonucleotide-(2'-deoxyribose 5'-phosphate)-2'-deoxyribonucleotide-DNA = a 3'-end 2'-deoxyribonucleotide-(2,3-dehydro-2,3-deoxyribose 5'-phosphate)-DNA + a 5'-end 5'-phospho-2'-deoxyribonucleoside-DNA + H(+). Its function is as follows. Involved in base excision repair of DNA damaged by oxidation or by mutagenic agents. Acts as a DNA glycosylase that recognizes and removes damaged bases. Has a preference for oxidized purines, such as 7,8-dihydro-8-oxoguanine (8-oxoG). Has AP (apurinic/apyrimidinic) lyase activity and introduces nicks in the DNA strand. Cleaves the DNA backbone by beta-delta elimination to generate a single-strand break at the site of the removed base with both 3'- and 5'-phosphates. This Laribacter hongkongensis (strain HLHK9) protein is Formamidopyrimidine-DNA glycosylase.